We begin with the raw amino-acid sequence, 97 residues long: Class II hydrophobin NC2 (97 aa).

An N-terminal signal peptide occupies residues 1 to 17; the sequence is MQFTIATVLSLLTITLA. 4 disulfides stabilise this stretch: C31-C79, C40-C70, C41-C53, and C80-C91. N62 carries N-linked (GlcNAc...) asparagine glycosylation.

Belongs to the cerato-ulmin hydrophobin family. As to quaternary structure, homotrimer. Further self-assembles to form highly ordered films at water-air interfaces through intermolecular interactions.

It is found in the secreted. It localises to the cell wall. Functionally, aerial growth, conidiation, and dispersal of filamentous fungi in the environment rely upon a capability of their secreting small amphipathic proteins called hydrophobins (HPBs) with low sequence identity. Class I can self-assemble into an outermost layer of rodlet bundles on aerial cell surfaces, conferring cellular hydrophobicity that supports fungal growth, development and dispersal; whereas Class II form highly ordered films at water-air interfaces through intermolecular interactions but contribute nothing to the rodlet structure. NC2 is a class II hydrophobin that has the potential to adsorb to the hydrophobic interface at the hydrophobic-hydrophilic interface at very high rate but the predicted self-assembly NC2 film possesses a lower flexural rigidity than other class II hydrophobins such as HFBII from Hypocrea jecorina (also known as Trichoderma reesei). This Neurospora crassa (strain ATCC 24698 / 74-OR23-1A / CBS 708.71 / DSM 1257 / FGSC 987) protein is Class II hydrophobin NC2.